The sequence spans 105 residues: Large ribosomal subunit protein uL24 (105 aa).

Belongs to the universal ribosomal protein uL24 family. Part of the 50S ribosomal subunit.

In terms of biological role, one of two assembly initiator proteins, it binds directly to the 5'-end of the 23S rRNA, where it nucleates assembly of the 50S subunit. One of the proteins that surrounds the polypeptide exit tunnel on the outside of the subunit. In Hahella chejuensis (strain KCTC 2396), this protein is Large ribosomal subunit protein uL24.